Consider the following 1057-residue polypeptide: MLCWGNASYGQLGLGGIDEEIVLEPRKSDFFVNKKVRDVGCGLRHTVFVLDDGTVYTCGCNDLGQLGHEKSRKKPEQVVALDAQNIVAVSCGEAHTLALNDKGQVYAWGLDSDGQLGLQGSEECIRVPRNIKSLSDIQIVQVACGYYHSLALSKASEVFCWGQNKYGQLGLGIECQKQTSPQLIKSLLGIPFMQVAAGGAHSFVLTLSGAIFGWGRNKFGQLGLNDENDRYVPNLLKSLRSQKIVYICCGEDHTAALTKEGGVFTFGAGGYGQLGHNSTSHEINPRKVFELMGSIVTQIACGRQHTSAFVPSSGRIYSFGLGGNGQLGTGSTSNRKSPFTVKGNWFSYNGQCPQDIGSEDYFCVKRIFSGGDQSFSHYSSPQSCGPPDDFRRSDPSKQIWTVNEALIQKWLSYPSGRFPVEIANEIDGTFSSSGCLNGSFLAVSNDDHYRTGTRFSGVDMNAARLLFHRLIQPDHPQISQQVAASLEKNLIPKLTSSLPDVEALRFYLTLPECPLMSDCNNFTTIAIPFGTALVNLEKAPLKVLENWWSVLEPPLFLKIVELFKEVVVHLLKLYKIGIPPSERRIFNSFLHTALKVLEILHRVNERTGQLIQYDKFYIHEVQELIDIRNDYINWVQQQAYGVDVSHGITELADIPVTICTYPFVFDAQAKTTLLQTDAVLQMQMAIDQAHRQNVSSLFLPVIESVNPCLILVVRRENIVGDAMEVLRKTKNIDYKKPLKVIFVGEDAVDAGGVRKEFFLLIMRELLDPKYGMFRYYEDSRLIWFSDKTFEDSDLFHLIGVICGLAIYNFTIVDLHFPLALYKKLLKRKPSLDDLKELMPDVGRSMQQLLDYPEDDIEETFCLNFTITVENFGATEVKELVLNGADTAVNKQNRQEFVDAYVDYIFNKSVASLFDAFHAGFHKVCGGKVLLLFQPNELQAMVIGNTNYDWKELEKNTEYKGEYWAEHPTIKIFWEVFHELPLEKKKQFLLFLTGSDRIPILGMKSLKLVIQSTGGGESYLPVSHTCFNLLDLPKYTEKETLRCKLIQAIDHNEGFSLI.

RCC1 repeat units lie at residues 1 to 51 (MLCW…FVLD), 52 to 101 (DGTV…ALND), 102 to 154 (KGQV…ALSK), 156 to 207 (SEVF…VLTL), 208 to 259 (SGAI…ALTK), 261 to 311 (GGVF…AFVP), and 313 to 366 (SGRI…CVKR). Positions 730–1057 (KNIDYKKPLK…IDHNEGFSLI (328 aa)) constitute an HECT domain. The active-site Glycyl thioester intermediate is C1025.

It localises to the cytoplasm. The protein resides in the cytosol. It carries out the reaction S-ubiquitinyl-[E2 ubiquitin-conjugating enzyme]-L-cysteine + [acceptor protein]-L-lysine = [E2 ubiquitin-conjugating enzyme]-L-cysteine + N(6)-ubiquitinyl-[acceptor protein]-L-lysine.. It participates in protein modification; protein ubiquitination. Its function is as follows. Probable E3 ubiquitin-protein ligase involved in either protein trafficking or in the distribution of cellular structures. Required for spermatozoon maturation and fertility, and for the removal of the cytoplasmic droplet of the spermatozoon. E3 ubiquitin-protein ligases accept ubiquitin from an E2 ubiquitin-conjugating enzyme in the form of a thioester and then directly transfer it to targeted substrates. In Rattus norvegicus (Rat), this protein is Probable E3 ubiquitin-protein ligase HERC4 (Herc4).